The following is a 451-amino-acid chain: Type 3 secretion system ATPase (451 aa).

184-189 (GGGKST) serves as a coordination point for ATP.

It belongs to the ATPase alpha/beta chains family. T3SS ATPase subfamily. As to quaternary structure, the core secretion machinery of the T3SS is composed of approximately 20 different proteins, including cytoplasmic components, a base, an export apparatus and a needle. This subunit is part of the cytosolic complex. Forms homohexamers.

It localises to the cytoplasm. It carries out the reaction ATP + H2O + cellular proteinSide 1 = ADP + phosphate + cellular proteinSide 2.. ATPase component of the type III secretion system (T3SS), also called injectisome, which is used to inject bacterial effector proteins into eukaryotic host cells. Acts as a molecular motor to provide the energy that is required for the export of proteins. Required for type III secretion apparatus (T3SA) formation, proper protein secretion, host cell invasion and virulence. May play a critical role in T3SS substrate recognition, disassembly of the effector/chaperone complex and unfolding of the effector in an ATP-dependent manner prior to secretion. The chain is Type 3 secretion system ATPase from Sinorhizobium fredii (strain NBRC 101917 / NGR234).